We begin with the raw amino-acid sequence, 189 residues long: Ribosome maturation factor RimM (189 aa).

The PRC barrel domain occupies 95 to 169 (DEDEFFQTDL…IIKVEPHAAG (75 aa)). The disordered stretch occupies residues 168–189 (AGLIADEHDNPPHESGKKPKKP). Residues 172–189 (ADEHDNPPHESGKKPKKP) show a composition bias toward basic and acidic residues.

It belongs to the RimM family. In terms of assembly, binds ribosomal protein uS19.

Its subcellular location is the cytoplasm. An accessory protein needed during the final step in the assembly of 30S ribosomal subunit, possibly for assembly of the head region. Essential for efficient processing of 16S rRNA. May be needed both before and after RbfA during the maturation of 16S rRNA. It has affinity for free ribosomal 30S subunits but not for 70S ribosomes. This chain is Ribosome maturation factor RimM, found in Brucella abortus (strain S19).